A 1873-amino-acid chain; its full sequence is Girdin (1873 aa).

Positions 12-132 constitute a Calponin-homology (CH) domain; it reads QFMTSPLVTW…KLLLLLLGCA (121 aa). Residues 196-425 are a coiled coil; that stretch reads HLRRLIDERD…EMAQKQSMDE (230 aa). Residues serine 233, serine 237, and serine 449 each carry the phosphoserine modification. 2 coiled-coil regions span residues 458–1232 and 1268–1385; these read TSSK…ESKN and HKNL…KFYD. Disordered regions lie at residues 816–841 and 1013–1034; these read ENKSLEQETSQLEKDKKQLEKENKRL and EERMVQSSIPVSGEDDKWGRES. Phosphoserine is present on serine 1020. Phosphoserine is present on serine 1387. The segment at 1390–1408 is phosphoinositide-binding; the sequence is RRRGNWITLKMRKLIKSKK. Residues 1407 to 1416 are compositionally biased toward basic and acidic residues; the sequence is KKDINRERQK. Disordered regions lie at residues 1407 to 1459, 1560 to 1602, and 1616 to 1643; these read KKDI…LGTK, TTSF…SNNN, and QSRPQSHSSGDFSLLHDHETWSSSGSSP. Serine 1417 is modified (phosphoserine; by PKB/AKT1). Polar residues-rich tracts occupy residues 1417–1430, 1445–1459, 1560–1579, and 1616–1626; these read SLTLTPTRSDSSEG, VGSNSLEDGQTLGTK, TTSFEDISPQGISDDSSTGS, and QSRPQSHSSGD. Threonine 1421 carries the post-translational modification Phosphothreonine. Residues 1674–1704 carry the GBA motif; that stretch reads KAGSPGSEVVTLQQFLEESNKLTSIQLKSSS. Phosphoserine is present on residues serine 1677, serine 1692, and serine 1719. Residues 1715–1825 are SH2-like; required for interaction with growth factor receptors; it reads SLSVSSDFLG…GTTRRTSIHD (111 aa). Residues 1738–1873 form a disordered region; it reads SGKTPGDFYD…KSRSREQQSS (136 aa). Over residues 1745–1755 the composition is skewed to basic and acidic residues; that stretch reads FYDRRTTKPEF. Tyrosine 1767 is subject to Phosphotyrosine. 3 stretches are compositionally biased toward polar residues: residues 1768–1781, 1789–1801, and 1809–1820; these read TISSAGKPTPSTQG, TSVSRQSKDSNPY, and SVISTAEGTTRR. Phosphotyrosine is present on tyrosine 1801. Residues serine 1822 and serine 1839 each carry the phosphoserine modification. Residues 1822–1832 show a composition bias toward basic and acidic residues; it reads SIHDFLSKDSR. Over residues 1839 to 1852 the composition is skewed to low complexity; it reads SSPPTAGSSSTTAS. Basic and acidic residues predominate over residues 1858-1873; that stretch reads QESRNSKSRSREQQSS.

Belongs to the CCDC88 family. As to quaternary structure, homodimer. Interacts (via GBA motif) with guanine nucleotide-binding protein G(i) alpha subunits GNAI1, GNAI2 and GNAI3. Also interacts (via GNA motif) with guanine nucleotide-binding protein G(s) alpha subunit GNAS. Interaction with G(i) alpha subunits occurs before interaction with GNAS and is regulated by phosphorylation; phosphorylation at Ser-1677 enhances binding to G(i) alpha subunits while phosphorylation at Ser-1692 abolishes G(i) alpha subunit binding, promoting binding to GNAS. Interacts (via C-terminal SH2-like region) with growth factor receptors EGFR, INSR and KDR/VEGFR2 (via their autophosphorylated cytoplasmic tails). Forms a complex with EGFR and GNAI3 which leads to enhanced EGFR signaling and triggering of cell migration; ligand stimulation is required for recruitment of GNAI3 to the complex. Interacts (tyrosine-phosphorylated form) with phosphatidylinositol 3-kinase (PI3K) regulatory subunit PIK3R1/p85a (via SH2 domains); the interaction enables recruitment of PIK3R1 to the EGFR receptor, enhancing PI3K activity and cell migration. Interacts with serine/threonine-protein kinase PRKCQ; the interaction leads to phosphorylation of CCDC88A and inhibition of its guanine nucleotide exchange factor activity. Interacts (via C-terminus) with DISC1; the interaction is direct. Interacts with AKT proteins; the interaction is inhibited in the presence of DISC1. Interacts with AKT1/PKB (via C-terminus). The non-phosphorylated form interacts with phosphatidylinositol 4-phosphate [Pi(4)P] and weakly with phosphatidylinositol 3-phosphate [Pi(3)P]. Interacts with microtubules. Interacts with actin. Phosphorylation is induced by epidermal growth factor (EGF) in a phosphoinositide 3-kinase (PI3K)-dependent manner. Phosphorylation by AKT1/PKB is necessary for the delocalization from the cell membrane and for cell migration. Phosphorylated on tyrosine residues which promotes binding to phosphatidylinositol 3-kinase (PI3K) regulatory subunit PIK3R1/p85a and enhances PI3K activity. Tyrosine-phosphorylated by both receptor and non-receptor tyrosine kinases in vitro. Tyrosine phosphorylation is required for AKT1-dependent phosphorylation of Ser-1417. Phosphorylation at Ser-1692 by PRKCQ disrupts interaction with GNAI3 and inhibits guanine nucleotide exchange factor activity. Expressed in the dentate gyrus, pyramidal cell layer of hippocampal regions CA1 and CA3 at postnatal 15. Expressed highly in neurons. Weakly in neuron progenitors (at protein level). Expressed in the dentate granule cell layer of the hippocampus. Expressed highly in the adult testis, moderately in the brain and at a low level in the spleen, lungs and fat.

The protein resides in the cell membrane. It is found in the cytoplasm. The protein localises to the cytosol. Its subcellular location is the cytoplasmic vesicle. It localises to the cell projection. The protein resides in the lamellipodium. It is found in the cytoskeleton. The protein localises to the cilium basal body. Its subcellular location is the microtubule organizing center. It localises to the centrosome. The protein resides in the centriole. In terms of biological role, bifunctional modulator of guanine nucleotide-binding proteins (G proteins). Acts as a non-receptor guanine nucleotide exchange factor which binds to and activates guanine nucleotide-binding protein G(i) alpha subunits. Also acts as a guanine nucleotide dissociation inhibitor for guanine nucleotide-binding protein G(s) subunit alpha GNAS. Essential for cell migration. Interacts in complex with G(i) alpha subunits with the EGFR receptor, retaining EGFR at the cell membrane following ligand stimulation and promoting EGFR signaling which triggers cell migration. Binding to Gi-alpha subunits displaces the beta and gamma subunits from the heterotrimeric G-protein complex which enhances phosphoinositide 3-kinase (PI3K)-dependent phosphorylation and kinase activity of AKT1/PKB. Phosphorylation of AKT1/PKB induces the phosphorylation of downstream effectors GSK3 and FOXO1/FKHR, and regulates DNA replication and cell proliferation. Binds in its tyrosine-phosphorylated form to the phosphatidylinositol 3-kinase (PI3K) regulatory subunit PIK3R1 which enables recruitment of PIK3R1 to the EGFR receptor, enhancing PI3K activity and cell migration. Plays a role as a key modulator of the AKT-mTOR signaling pathway, controlling the tempo of the process of newborn neuron integration during adult neurogenesis, including correct neuron positioning, dendritic development and synapse formation. Inhibition of G(s) subunit alpha GNAS leads to reduced cellular levels of cAMP and suppression of cell proliferation. Essential for the integrity of the actin cytoskeleton. Required for formation of actin stress fibers and lamellipodia. May be involved in membrane sorting in the early endosome. Plays a role in ciliogenesis and cilium morphology and positioning and this may partly be through regulation of the localization of scaffolding protein CROCC/Rootletin. The polypeptide is Girdin (Ccdc88a) (Mus musculus (Mouse)).